A 260-amino-acid polypeptide reads, in one-letter code: 5'-nucleotidase SurE (260 aa).

A divalent metal cation-binding residues include D8, D9, S39, and N93.

The protein belongs to the SurE nucleotidase family. A divalent metal cation is required as a cofactor.

It is found in the cytoplasm. It catalyses the reaction a ribonucleoside 5'-phosphate + H2O = a ribonucleoside + phosphate. Its function is as follows. Nucleotidase that shows phosphatase activity on nucleoside 5'-monophosphates. The protein is 5'-nucleotidase SurE of Thermofilum pendens (strain DSM 2475 / Hrk 5).